Consider the following 503-residue polypeptide: 12-dehydrotetracycline 5-monooxygenase/anhydrotetracycline 6-monooxygenase (503 aa).

Residues Thr13, 32 to 33 (ER), Leu44, Gln99, Val123, Thr160, Asp288, and 301 to 302 (LN) each bind FAD.

The protein belongs to the PheA/TfdB FAD monooxygenase family. As to quaternary structure, monomer. It depends on FAD as a cofactor.

The enzyme catalyses 5a,11a-dehydrotetracycline + NADPH + O2 + H(+) = 5a,11a-dehydrooxytetracycline + NADP(+) + H2O. The catalysed reaction is anhydrotetracycline + NADPH + O2 + H(+) = 5a,11a-dehydrotetracycline + NADP(+) + H2O. The protein operates within antibiotic biosynthesis; oxytetracycline biosynthesis. Functionally, involved in the biosynthesis of the antibiotics oxytetracycline and tetracycline. OxyS starts by catalyzing the stereospecific hydroxylation of anhydrotetracycline at C(6) position to yield 5a,11a-dehydrotetracycline (12-dehydrotetracycline). If the released product is captured by OxyR, it is reduced to tetracycline. However, if the released product is recaptured by OxyS, it performs an additional hydroxylation at C(5), producing 5a,11a-dehydrooxytetracycline, which, following the action of OxyR becomes oxytetracycline. The polypeptide is 12-dehydrotetracycline 5-monooxygenase/anhydrotetracycline 6-monooxygenase (Streptomyces rimosus subsp. rimosus (strain ATCC 10970 / DSM 40260 / JCM 4667 / NRRL 2234)).